Here is an 883-residue protein sequence, read N- to C-terminus: MPILLFLLDTSASMNQRSHLGTTYLDIAKGAVETFMKLRSRDPASRGDRYMLVTVEEPPYGIKAGWKENHATFMNELKNLQAVGLTTLGQSLRTAFDLLNLNRLVTGIDNYGQGRNPFFLEPSIIIVITDGSKLTTANGVQDELHLPLYSPLPGSELTKEPFRWDQRLFALVLRLPGASLVEQEQPPAVQFDESPITAMCDVTGGRSYSVTSQRILNQCLESLVQKVQSGVVIHFEKSGPDPPILEDGLTDPVRSVGSQPWHNCHKLIYVRPNPKTGVPLGHWPIPESFWPDQNSPTLPPRTSHPVVKFSCTDSEPMIIDKLPFDKYELEPSPLTQFILERKSPHSCWPVFVANSAKYSELGHPFGYLKASTALNCVNLFVLPYNYPVFLPLLDDLFKIHKNKPSLKWRQLFENYLKTMPPYYIGPLKKALRMMGAPNLMPDSMEYGLSYSVVSYLKKLSQQAKVESDRVIGSIGKKFPQETGIKVRSGSNALSLALRKDFKQLLQEITGEVPQRPMDLNMKEFAGFQIALLNKDIKPQTFRNAYDVPRTNLLDHLTRMRVNLLRSTRQFLKGQDEDQAHSIPIVQMGNYQEFLKHIPSPLRELDYDQPRRLHTFGNPFKLDKKGMMIDEADEFVSGNQNKHKRTGEPNMQGVPKRRRCMSPLLRSRPQSPAVINNHIGGKDPPISVNQVSPDLPKPVAVHKNTDLSNNATVNEATENHVADHFCDDLLITKSEPFGTLSSAALEATEGYAAEKDSNFRPNDISDVFLENTKETGDNESCLPNNNAAFTHRKRRLQQCRSYEEANIELKAQILKEIRKPGRKYGIIFTLLKDVQGDLQTRLLFLQNVIQEAARFKKRNLIEQLEGFLEEIHRRASQVNHLSSC.

The VWFA domain maps to 3–227; the sequence is ILLFLLDTSA…QCLESLVQKV (225 aa). The Inhibitory loop signature appears at 626-633; it reads MMIDEADE.

The protein belongs to the Integrator subunit 6 family. As to quaternary structure, component of the Integrator complex, composed of core subunits INTS1, INTS2, INTS3, INTS4, INTS5, INTS6, INTS7, INTS8, INTS9/RC74, INTS10, INTS11/CPSF3L, INTS12, INTS13, INTS14 and INTS15. The core complex associates with protein phosphatase 2A subunits PPP2CA and PPP2R1A, to form the Integrator-PP2A (INTAC) complex.

It is found in the nucleus. The protein localises to the chromosome. Functionally, component of the integrator complex, a multiprotein complex that terminates RNA polymerase II (Pol II) transcription in the promoter-proximal region of genes. The integrator complex provides a quality checkpoint during transcription elongation by driving premature transcription termination of transcripts that are unfavorably configured for transcriptional elongation: the complex terminates transcription by (1) catalyzing dephosphorylation of the C-terminal domain (CTD) of Pol II subunit POLR2A/RPB1 and SUPT5H/SPT5, (2) degrading the exiting nascent RNA transcript via endonuclease activity and (3) promoting the release of Pol II from bound DNA. The integrator complex is also involved in terminating the synthesis of non-coding Pol II transcripts, such as enhancer RNAs (eRNAs), small nuclear RNAs (snRNAs), telomerase RNAs and long non-coding RNAs (lncRNAs). Within the integrator complex, INTS6 acts as a molecular adapter that promotes assembly of protein phosphatase 2A (PP2A) subunits to the integrator core complex, promoting recruitment of PP2A to transcription pause-release checkpoint. This chain is Integrator complex subunit 6-A (ints6-a), found in Xenopus laevis (African clawed frog).